Reading from the N-terminus, the 229-residue chain is Uracil-DNA glycosylase (229 aa).

The Proton acceptor role is filled by Asp65.

The protein belongs to the uracil-DNA glycosylase (UDG) superfamily. UNG family.

Its subcellular location is the cytoplasm. The enzyme catalyses Hydrolyzes single-stranded DNA or mismatched double-stranded DNA and polynucleotides, releasing free uracil.. Excises uracil residues from the DNA which can arise as a result of misincorporation of dUMP residues by DNA polymerase or due to deamination of cytosine. The polypeptide is Uracil-DNA glycosylase (Brevibacillus brevis (strain 47 / JCM 6285 / NBRC 100599)).